We begin with the raw amino-acid sequence, 452 residues long: UDP-N-acetylmuramoylalanine--D-glutamate ligase (452 aa).

An ATP-binding site is contributed by 115-121 (GTNGKTT).

This sequence belongs to the MurCDEF family.

Its subcellular location is the cytoplasm. The enzyme catalyses UDP-N-acetyl-alpha-D-muramoyl-L-alanine + D-glutamate + ATP = UDP-N-acetyl-alpha-D-muramoyl-L-alanyl-D-glutamate + ADP + phosphate + H(+). It participates in cell wall biogenesis; peptidoglycan biosynthesis. Functionally, cell wall formation. Catalyzes the addition of glutamate to the nucleotide precursor UDP-N-acetylmuramoyl-L-alanine (UMA). The protein is UDP-N-acetylmuramoylalanine--D-glutamate ligase of Citrifermentans bemidjiense (strain ATCC BAA-1014 / DSM 16622 / JCM 12645 / Bem) (Geobacter bemidjiensis).